A 442-amino-acid polypeptide reads, in one-letter code: tRNA modification GTPase MnmE (442 aa).

Arg22, Glu79, and Lys119 together coordinate (6S)-5-formyl-5,6,7,8-tetrahydrofolate. The TrmE-type G domain maps to 216-366; it reads GIKTCLVGAP…LLEKIKSIFA (151 aa). Position 226 (Asn226) interacts with K(+). GTP-binding positions include 226-231, 245-251, and 270-273; these read NSGKSS, SEIPGTT, and DTAG. A Mg(2+)-binding site is contributed by Ser230. K(+) contacts are provided by Ser245, Ile247, and Thr250. Thr251 is a binding site for Mg(2+). Residue Lys442 coordinates (6S)-5-formyl-5,6,7,8-tetrahydrofolate.

Belongs to the TRAFAC class TrmE-Era-EngA-EngB-Septin-like GTPase superfamily. TrmE GTPase family. Homodimer. Heterotetramer of two MnmE and two MnmG subunits. The cofactor is K(+).

It is found in the cytoplasm. In terms of biological role, exhibits a very high intrinsic GTPase hydrolysis rate. Involved in the addition of a carboxymethylaminomethyl (cmnm) group at the wobble position (U34) of certain tRNAs, forming tRNA-cmnm(5)s(2)U34. The sequence is that of tRNA modification GTPase MnmE from Mesomycoplasma hyopneumoniae (strain 232) (Mycoplasma hyopneumoniae).